We begin with the raw amino-acid sequence, 122 residues long: Large ribosomal subunit protein uL14 (122 aa).

Belongs to the universal ribosomal protein uL14 family. In terms of assembly, part of the 50S ribosomal subunit. Forms a cluster with proteins L3 and L19. In the 70S ribosome, L14 and L19 interact and together make contacts with the 16S rRNA in bridges B5 and B8.

Its function is as follows. Binds to 23S rRNA. Forms part of two intersubunit bridges in the 70S ribosome. This Geotalea daltonii (strain DSM 22248 / JCM 15807 / FRC-32) (Geobacter daltonii) protein is Large ribosomal subunit protein uL14.